The chain runs to 192 residues: Intraflagellar transport protein 22 (192 aa).

Residues 12–19 and 62–69 each bind GTP; these read GPQRTGKT and WDVSGSVQ.

It belongs to the small GTPase superfamily. Rab family. As to quaternary structure, component of the IFT complex B, composed of IFT88, IFT70, IFT52, IFT46, IFT27, IFT25 and IFT22.

It is found in the cell projection. It localises to the cilium. The protein resides in the flagellum. In terms of biological role, component of the intraflagellar transport (IFT) complex B. Functions in regulating the cellular pool size of both complex A and complex B and thus plays a critical role in determining the cellular availability of IFT particles. The polypeptide is Intraflagellar transport protein 22 (FAP9) (Chlamydomonas reinhardtii (Chlamydomonas smithii)).